We begin with the raw amino-acid sequence, 45 residues long: Caltrin-like protein 1 (45 aa).

A Kazal-like domain is found at 8–45; that stretch reads DSDRPNCSRYVQHLYMCTKELDPVCGTDGHTYGNRSIF. N-linked (GlcNAc...) asparagine glycans are attached at residues Asn13 and Asn41.

Post-translationally, glycosylated.

Its subcellular location is the secreted. Its function is as follows. Inhibits calcium transport into spermatozoa. The protein is Caltrin-like protein 1 of Cavia porcellus (Guinea pig).